Reading from the N-terminus, the 292-residue chain is Potassium channel, subfamily K, member 16 (292 aa).

Topologically, residues methionine 1 to glutamine 13 are cytoplasmic. Residues valine 14–leucine 34 form a helical membrane-spanning segment. The pore-forming intramembrane region spans serine 98–proline 116. Positions 108, 109, 110, and 111 each coordinate K(+). Residues threonine 108–asparagine 113 form a selectivity filter 1 region. The helical transmembrane segment at alanine 120–leucine 140 threads the bilayer. At asparagine 141–glutamine 165 the chain is on the cytoplasmic side. Residues leucine 166 to phenylalanine 186 traverse the membrane as a helical segment. An intramembrane region (pore-forming) is located at residues glycine 202–glycine 221. Threonine 212, isoleucine 213, glycine 214, and phenylalanine 215 together coordinate K(+). The tract at residues threonine 212–aspartate 217 is selectivity filter 2. Residues isoleucine 238–leucine 258 traverse the membrane as a helical segment. The Cytoplasmic portion of the chain corresponds to histidine 259–alanine 292.

The protein belongs to the two pore domain potassium channel (TC 1.A.1.8) family. In terms of assembly, homodimer; disulfide-linked. Heterodimer with KCNK17 and KCNK5. As to expression, expressed in pacreatic beta-cells (at protein level). Expressed in pacreatic delta-cells (at protein level).

Its subcellular location is the cell membrane. It localises to the endoplasmic reticulum membrane. It is found in the mitochondrion inner membrane. The enzyme catalyses K(+)(in) = K(+)(out). The catalysed reaction is Rb(+)(in) = Rb(+)(out). It carries out the reaction Cs(+)(in) = Cs(+)(out). In terms of biological role, k(+) channel that conducts voltage-dependent outward rectifying currents upon membrane depolarization. Voltage sensing is coupled to K(+) electrochemical gradient in an 'ion flux gating' mode where outward but not inward ion flow opens the gate. Homo- and heterodimerizes to form functional channels with distinct regulatory and gating properties. In pancreatic islets, conducts K(+) countercurrents for Ca(2+) release from the endoplasmic reticulum (ER) and regulates the frequency and duration of cytosolic Ca(2+) oscillations coupled to secretion of pancreatic hormones. In pancreatic beta cells, drives ER Ca(2+) efflux, which in turn activates Ca(2+)-dependent plasma membrane K(+) slow currents and cytosolic Ca(2+) influx, overall contributing to synchronous cytosolic Ca(2+) oscillations. Limits glucose-induced cytosolic Ca(2+) oscillations coupled to second-phase INS secretion. Contributes to beta cell adaptation to acute inflammation by maintaining normal cytosolic Ca(2+) levels and INS secretion. May regulate beta cell mitochondrial Ca(2+) levels either indirectly via ER Ca(2+) efflux or directly by hyperpolarizing the mitochondrial membrane potential. Limits mitochondrial Ca(2+) oscillations and ATP production involved in glucose homeostasis upon metabolic stress. In pancreatic delta cells, limits Ca(2+)-induced Ca(2+)-release involved in somatostatin secretion and modulates islet paracrine signaling involved in glucagon secretion. Permeable to other monovalent cations such as Rb(+) and Cs(+). The protein is Potassium channel, subfamily K, member 16 of Mus musculus (Mouse).